Reading from the N-terminus, the 96-residue chain is Probable quinol oxidase subunit 4 (96 aa).

A run of 3 helical transmembrane segments spans residues 8 to 28, 37 to 57, and 68 to 88; these read TVGF…TLYT, TIIF…FMHL, and FKVI…YWVM.

This sequence belongs to the cytochrome c oxidase bacterial subunit 4 family.

The protein resides in the cell membrane. It catalyses the reaction 2 a quinol + O2 = 2 a quinone + 2 H2O. Functionally, catalyzes quinol oxidation with the concomitant reduction of oxygen to water. The chain is Probable quinol oxidase subunit 4 (qoxD) from Staphylococcus haemolyticus (strain JCSC1435).